We begin with the raw amino-acid sequence, 569 residues long: Dihydroxy-acid dehydratase (569 aa).

D80 serves as a coordination point for Mg(2+). C121 contributes to the [2Fe-2S] cluster binding site. Mg(2+) contacts are provided by D122 and K123. N6-carboxylysine is present on K123. C194 contacts [2Fe-2S] cluster. E446 is a Mg(2+) binding site. Residue S472 is the Proton acceptor of the active site.

It belongs to the IlvD/Edd family. In terms of assembly, homodimer. Requires [2Fe-2S] cluster as cofactor. Mg(2+) serves as cofactor.

It catalyses the reaction (2R)-2,3-dihydroxy-3-methylbutanoate = 3-methyl-2-oxobutanoate + H2O. The enzyme catalyses (2R,3R)-2,3-dihydroxy-3-methylpentanoate = (S)-3-methyl-2-oxopentanoate + H2O. The protein operates within amino-acid biosynthesis; L-isoleucine biosynthesis; L-isoleucine from 2-oxobutanoate: step 3/4. Its pathway is amino-acid biosynthesis; L-valine biosynthesis; L-valine from pyruvate: step 3/4. Functions in the biosynthesis of branched-chain amino acids. Catalyzes the dehydration of (2R,3R)-2,3-dihydroxy-3-methylpentanoate (2,3-dihydroxy-3-methylvalerate) into 2-oxo-3-methylpentanoate (2-oxo-3-methylvalerate) and of (2R)-2,3-dihydroxy-3-methylbutanoate (2,3-dihydroxyisovalerate) into 2-oxo-3-methylbutanoate (2-oxoisovalerate), the penultimate precursor to L-isoleucine and L-valine, respectively. The chain is Dihydroxy-acid dehydratase from Desulforudis audaxviator (strain MP104C).